A 556-amino-acid chain; its full sequence is Oxygen-dependent choline dehydrogenase (556 aa).

FAD is bound at residue 4 to 33 (DYIIIGAGSAGNVLATRLTEDPNTSVLLLE). Catalysis depends on His-473, which acts as the Proton acceptor.

This sequence belongs to the GMC oxidoreductase family. Requires FAD as cofactor.

The catalysed reaction is choline + A = betaine aldehyde + AH2. It catalyses the reaction betaine aldehyde + NAD(+) + H2O = glycine betaine + NADH + 2 H(+). Its pathway is amine and polyamine biosynthesis; betaine biosynthesis via choline pathway; betaine aldehyde from choline (cytochrome c reductase route): step 1/1. In terms of biological role, involved in the biosynthesis of the osmoprotectant glycine betaine. Catalyzes the oxidation of choline to betaine aldehyde and betaine aldehyde to glycine betaine at the same rate. This chain is Oxygen-dependent choline dehydrogenase, found in Escherichia coli (strain K12 / DH10B).